A 126-amino-acid chain; its full sequence is RutC family protein y4sK (126 aa).

It belongs to the RutC family.

In Sinorhizobium fredii (strain NBRC 101917 / NGR234), this protein is RutC family protein y4sK.